The sequence spans 311 residues: Ribosomal RNA small subunit methyltransferase H (311 aa).

S-adenosyl-L-methionine contacts are provided by residues 33–35 (GGH), Asp-51, Phe-78, Asp-99, and Gln-106. Positions 289 to 311 (EEIEKNRRAHSAKLRAAEKLSFA) are disordered.

Belongs to the methyltransferase superfamily. RsmH family.

It localises to the cytoplasm. The catalysed reaction is cytidine(1402) in 16S rRNA + S-adenosyl-L-methionine = N(4)-methylcytidine(1402) in 16S rRNA + S-adenosyl-L-homocysteine + H(+). In terms of biological role, specifically methylates the N4 position of cytidine in position 1402 (C1402) of 16S rRNA. The chain is Ribosomal RNA small subunit methyltransferase H from Carboxydothermus hydrogenoformans (strain ATCC BAA-161 / DSM 6008 / Z-2901).